We begin with the raw amino-acid sequence, 429 residues long: Ribosomal RNA small subunit methyltransferase B (429 aa).

Residues 254–260 (CAAPGGK), Asp-277, Asp-303, and Asp-322 contribute to the S-adenosyl-L-methionine site. Cys-375 acts as the Nucleophile in catalysis.

Belongs to the class I-like SAM-binding methyltransferase superfamily. RsmB/NOP family.

Its subcellular location is the cytoplasm. The catalysed reaction is cytidine(967) in 16S rRNA + S-adenosyl-L-methionine = 5-methylcytidine(967) in 16S rRNA + S-adenosyl-L-homocysteine + H(+). In terms of biological role, specifically methylates the cytosine at position 967 (m5C967) of 16S rRNA. This chain is Ribosomal RNA small subunit methyltransferase B, found in Shigella flexneri.